The primary structure comprises 543 residues: Probable protein kinase UbiB (543 aa).

In terms of domain architecture, Protein kinase spans 123–501 (DFDSQALASA…QQRQGQSRYL (379 aa)). ATP contacts are provided by residues 129–137 (LASASIAQV) and Lys-152. The active-site Proton acceptor is Asp-287. The helical transmembrane segment at 517-539 (LADATEVSTGFIVAGALAWFIGW) threads the bilayer.

Belongs to the ABC1 family. UbiB subfamily.

The protein localises to the cell inner membrane. The protein operates within cofactor biosynthesis; ubiquinone biosynthesis [regulation]. Is probably a protein kinase regulator of UbiI activity which is involved in aerobic coenzyme Q (ubiquinone) biosynthesis. This Yersinia pseudotuberculosis serotype O:1b (strain IP 31758) protein is Probable protein kinase UbiB.